The sequence spans 371 residues: Glutamate 5-kinase (371 aa).

ATP is bound at residue Lys12. Residues Ser52, Asp136, and Asn148 each contribute to the substrate site. ATP-binding positions include 168-169 (SD) and 210-216 (TGGMRTK). Residues 275 to 354 (QGEILVDEGA…EDIAEKFGYS (80 aa)) form the PUA domain.

Belongs to the glutamate 5-kinase family.

It is found in the cytoplasm. It catalyses the reaction L-glutamate + ATP = L-glutamyl 5-phosphate + ADP. Its pathway is amino-acid biosynthesis; L-proline biosynthesis; L-glutamate 5-semialdehyde from L-glutamate: step 1/2. Its function is as follows. Catalyzes the transfer of a phosphate group to glutamate to form L-glutamate 5-phosphate. In Idiomarina loihiensis (strain ATCC BAA-735 / DSM 15497 / L2-TR), this protein is Glutamate 5-kinase.